The chain runs to 111 residues: UPF0321 protein P20C8.02c (111 aa).

An N-terminal signal peptide occupies residues 1–17 (MLLLFCICCVFIKLVLA). N-linked (GlcNAc...) asparagine glycosylation is present at N20.

Belongs to the UPF0321 family.

This is UPF0321 protein P20C8.02c from Schizosaccharomyces pombe (strain 972 / ATCC 24843) (Fission yeast).